We begin with the raw amino-acid sequence, 418 residues long: Tryptophan synthase beta chain (418 aa).

Residues 1-18 (MTSTLPNASTPDPASLQP) are compositionally biased toward polar residues. The interval 1–23 (MTSTLPNASTPDPASLQPSVRPG) is disordered. An N6-(pyridoxal phosphate)lysine modification is found at lysine 111.

The protein belongs to the TrpB family. As to quaternary structure, tetramer of two alpha and two beta chains. The cofactor is pyridoxal 5'-phosphate.

It catalyses the reaction (1S,2R)-1-C-(indol-3-yl)glycerol 3-phosphate + L-serine = D-glyceraldehyde 3-phosphate + L-tryptophan + H2O. It functions in the pathway amino-acid biosynthesis; L-tryptophan biosynthesis; L-tryptophan from chorismate: step 5/5. The beta subunit is responsible for the synthesis of L-tryptophan from indole and L-serine. The chain is Tryptophan synthase beta chain from Parasynechococcus marenigrum (strain WH8102).